A 367-amino-acid polypeptide reads, in one-letter code: 2-aminoethylphosphonate--pyruvate transaminase (367 aa).

Lysine 193 carries the post-translational modification N6-(pyridoxal phosphate)lysine.

It belongs to the class-V pyridoxal-phosphate-dependent aminotransferase family. PhnW subfamily. Homodimer. Requires pyridoxal 5'-phosphate as cofactor.

It catalyses the reaction (2-aminoethyl)phosphonate + pyruvate = phosphonoacetaldehyde + L-alanine. Functionally, involved in phosphonate degradation. The sequence is that of 2-aminoethylphosphonate--pyruvate transaminase from Vibrio vulnificus (strain CMCP6).